The chain runs to 84 residues: Putative antitoxin VapB37 (84 aa).

Functionally, probable antitoxin component of a type II toxin-antitoxin (TA) system. Its putative cognate toxin is VapC37. The sequence is that of Putative antitoxin VapB37 (vapB37) from Mycobacterium tuberculosis (strain CDC 1551 / Oshkosh).